The following is a 712-amino-acid chain: Semaphorin-1A (712 aa).

The signal sequence occupies residues 1–20 (MVVKILVWSICLIALCHAWM). The region spanning 21–483 (PDSSSKLINH…GKDEIRLANL (463 aa)) is the Sema domain. The Extracellular segment spans residues 21–601 (PDSSSKLINH…IGGCAVRQQL (581 aa)). Asparagine 42 and asparagine 69 each carry an N-linked (GlcNAc...) asparagine glycan. 2 cysteine pairs are disulfide-bonded: cysteine 95–cysteine 105 and cysteine 123–cysteine 132. Residues asparagine 161 and asparagine 265 are each glycosylated (N-linked (GlcNAc...) asparagine). Disulfide bonds link cysteine 242/cysteine 357, cysteine 266/cysteine 316, cysteine 486/cysteine 503, and cysteine 495/cysteine 512. The helical transmembrane segment at 602-622 (VIYTAGTLHIVVVVVSIVGLF) threads the bilayer. The Cytoplasmic portion of the chain corresponds to 623-712 (SWLYSGLSVF…TLQKIKKTYI (90 aa)).

It belongs to the semaphorin family.

The protein resides in the membrane. Plays a role in growth cones guidance. The sequence is that of Semaphorin-1A (SEMA-1A) from Tribolium confusum (Confused flour beetle).